A 1000-amino-acid polypeptide reads, in one-letter code: C2 domain-containing protein 5 (1000 aa).

A C2 domain is found at 1-109; it reads MPGKLKVKIV…EAATVISGWF (109 aa). Ca(2+) is bound by residues Asp-19, Asp-26, Asp-76, Asp-78, Ser-81, and Asp-84. A Phosphoserine; by PKB/AKT2 modification is found at Ser-197. Phosphoserine occurs at positions 200 and 260. The interval 265–330 is disordered; it reads MKEIPFNEDP…SGSAGKEGGP (66 aa). Over residues 274-289 the composition is skewed to polar residues; sequence PNPNTHSSGPSTPLKN. Low complexity predominate over residues 290 to 318; sequence QTYSFSPSKSYSRQSSSSDTDLSLTPKTG. Phosphoserine occurs at positions 293, 295, 304, 305, and 306. Thr-317 carries the post-translational modification Phosphothreonine. Positions 319–328 are enriched in gly residues; the sequence is MGSGSAGKEG. Ser-323 carries the phosphoserine modification. Residue Thr-601 is modified to Phosphothreonine. The disordered stretch occupies residues 639-669; it reads EIIGSPIPEPRQRSRLLRSQSESSDEVTELD. A phosphoserine mark is found at Ser-643, Ser-657, Ser-659, Ser-661, and Ser-662. Phosphothreonine is present on Thr-666. Ser-671 carries the phosphoserine modification. Thr-807 carries the post-translational modification Phosphothreonine. 2 positions are modified to phosphoserine: Ser-817 and Ser-852.

It depends on Ca(2+) as a cofactor. Post-translationally, phosphorylated on Ser-197 by active myristoylated kinase AKT2; insulin-stimulated phosphorylation by AKT2 regulates SLC2A4/GLUT4 translocation into the plasma membrane.

The protein localises to the cytoplasmic vesicle membrane. Its subcellular location is the cytoplasm. The protein resides in the cell cortex. It localises to the cell membrane. It is found in the cell projection. The protein localises to the ruffle. Functionally, required for insulin-stimulated glucose transport and glucose transporter SLC2A4/GLUT4 translocation from intracellular glucose storage vesicle (GSV) to the plasma membrane (PM) in adipocytes. Binds phospholipid membranes in a calcium-dependent manner and is necessary for the optimal membrane fusion between SLC2A4/GLUT4 GSV and the PM. The protein is C2 domain-containing protein 5 (C2CD5) of Pongo abelii (Sumatran orangutan).